Reading from the N-terminus, the 311-residue chain is Phosphoribosylaminoimidazole-succinocarboxamide synthase (311 aa).

Belongs to the SAICAR synthetase family.

It carries out the reaction 5-amino-1-(5-phospho-D-ribosyl)imidazole-4-carboxylate + L-aspartate + ATP = (2S)-2-[5-amino-1-(5-phospho-beta-D-ribosyl)imidazole-4-carboxamido]succinate + ADP + phosphate + 2 H(+). It functions in the pathway purine metabolism; IMP biosynthesis via de novo pathway; 5-amino-1-(5-phospho-D-ribosyl)imidazole-4-carboxamide from 5-amino-1-(5-phospho-D-ribosyl)imidazole-4-carboxylate: step 1/2. In Azoarcus sp. (strain BH72), this protein is Phosphoribosylaminoimidazole-succinocarboxamide synthase.